The primary structure comprises 504 residues: Pyruvate kinase (504 aa).

Substrate is bound at residue arginine 53. The K(+) site is built by asparagine 55, serine 57, aspartate 88, and threonine 89. Residue 55–58 (NFSH) coordinates ATP. ATP-binding residues include arginine 95 and lysine 181. Glutamate 246 is a binding site for Mg(2+). Substrate contacts are provided by glycine 269, aspartate 270, and threonine 302. Residue aspartate 270 coordinates Mg(2+).

This sequence belongs to the pyruvate kinase family. Homotetramer. Mg(2+) serves as cofactor. It depends on K(+) as a cofactor.

The enzyme catalyses pyruvate + ATP = phosphoenolpyruvate + ADP + H(+). The protein operates within carbohydrate degradation; glycolysis; pyruvate from D-glyceraldehyde 3-phosphate: step 5/5. This Debaryomyces hansenii (strain ATCC 36239 / CBS 767 / BCRC 21394 / JCM 1990 / NBRC 0083 / IGC 2968) (Yeast) protein is Pyruvate kinase (PYK1).